Here is a 232-residue protein sequence, read N- to C-terminus: Enolase-phosphatase E1 (232 aa).

The protein belongs to the HAD-like hydrolase superfamily. MasA/MtnC family. Monomer. Mg(2+) is required as a cofactor.

The enzyme catalyses 5-methylsulfanyl-2,3-dioxopentyl phosphate + H2O = 1,2-dihydroxy-5-(methylsulfanyl)pent-1-en-3-one + phosphate. The protein operates within amino-acid biosynthesis; L-methionine biosynthesis via salvage pathway; L-methionine from S-methyl-5-thio-alpha-D-ribose 1-phosphate: step 3/6. Its pathway is amino-acid biosynthesis; L-methionine biosynthesis via salvage pathway; L-methionine from S-methyl-5-thio-alpha-D-ribose 1-phosphate: step 4/6. In terms of biological role, bifunctional enzyme that catalyzes the enolization of 2,3-diketo-5-methylthiopentyl-1-phosphate (DK-MTP-1-P) into the intermediate 2-hydroxy-3-keto-5-methylthiopentenyl-1-phosphate (HK-MTPenyl-1-P), which is then dephosphorylated to form the acireductone 1,2-dihydroxy-3-keto-5-methylthiopentene (DHK-MTPene). This is Enolase-phosphatase E1 from Xanthomonas oryzae pv. oryzae (strain KACC10331 / KXO85).